We begin with the raw amino-acid sequence, 204 residues long: Large ribosomal subunit protein uL4 (204 aa).

Residues 49-90 (KVKGMGEVSGTTKKPYRQKGTGSARQGSLRAPQYRTGGAVHG) form a disordered region.

Belongs to the universal ribosomal protein uL4 family. As to quaternary structure, part of the 50S ribosomal subunit.

Its function is as follows. One of the primary rRNA binding proteins, this protein initially binds near the 5'-end of the 23S rRNA. It is important during the early stages of 50S assembly. It makes multiple contacts with different domains of the 23S rRNA in the assembled 50S subunit and ribosome. Functionally, forms part of the polypeptide exit tunnel. The sequence is that of Large ribosomal subunit protein uL4 from Gluconacetobacter diazotrophicus (strain ATCC 49037 / DSM 5601 / CCUG 37298 / CIP 103539 / LMG 7603 / PAl5).